A 98-amino-acid chain; its full sequence is Cystatin-B (98 aa).

The 80-residue stretch at Gly-4–Ser-83 folds into the Cystatin domain. Residues Gln-46–Gly-50 carry the Secondary area of contact motif.

This sequence belongs to the cystatin family. Ubiquitously expressed in normal and lipopolysaccharide (LPS)-stimulated tissues including brain, eye, gullet, heart, liver, muscle, stomach, kidney, spleen, pyloric ceca, intestine and gill.

It localises to the cytoplasm. With respect to regulation, greatly decreased inhibitory activity against papain protease by metal ions including ZnSO(4), CuSO(4), HgCl(2) and CoCl(2). Decreased inhibitory activity against papain protease by detergents including Tween 20, SDS and Brij 35. Its function is as follows. Thiol protease inhibitor. Has high papain, bovine cathepsin B and fish cathepsins F and X inhibitory activity and inhibits fish cathepsins L, S and K to a lesser extent in vitro. May be involved in innate immunity. The polypeptide is Cystatin-B (Paralichthys olivaceus (Bastard halibut)).